Reading from the N-terminus, the 252-residue chain is Imidazole glycerol phosphate synthase subunit HisF (252 aa).

Residues Asp-11 and Asp-130 contribute to the active site.

It belongs to the HisA/HisF family. As to quaternary structure, heterodimer of HisH and HisF.

It is found in the cytoplasm. It catalyses the reaction 5-[(5-phospho-1-deoxy-D-ribulos-1-ylimino)methylamino]-1-(5-phospho-beta-D-ribosyl)imidazole-4-carboxamide + L-glutamine = D-erythro-1-(imidazol-4-yl)glycerol 3-phosphate + 5-amino-1-(5-phospho-beta-D-ribosyl)imidazole-4-carboxamide + L-glutamate + H(+). It functions in the pathway amino-acid biosynthesis; L-histidine biosynthesis; L-histidine from 5-phospho-alpha-D-ribose 1-diphosphate: step 5/9. IGPS catalyzes the conversion of PRFAR and glutamine to IGP, AICAR and glutamate. The HisF subunit catalyzes the cyclization activity that produces IGP and AICAR from PRFAR using the ammonia provided by the HisH subunit. The polypeptide is Imidazole glycerol phosphate synthase subunit HisF (Bacillus pumilus (strain SAFR-032)).